A 282-amino-acid polypeptide reads, in one-letter code: Pantothenate synthetase (282 aa).

33–40 lines the ATP pocket; it reads MGALHAGH. Catalysis depends on His40, which acts as the Proton donor. Residue Gln64 coordinates (R)-pantoate. Gln64 contacts beta-alanine. An ATP-binding site is contributed by 150-153; the sequence is GEKD. Residue Gln156 coordinates (R)-pantoate. Residues Val179 and 187–190 each bind ATP; that span reads LSSR.

This sequence belongs to the pantothenate synthetase family. Homodimer.

It is found in the cytoplasm. It carries out the reaction (R)-pantoate + beta-alanine + ATP = (R)-pantothenate + AMP + diphosphate + H(+). The protein operates within cofactor biosynthesis; (R)-pantothenate biosynthesis; (R)-pantothenate from (R)-pantoate and beta-alanine: step 1/1. Its function is as follows. Catalyzes the condensation of pantoate with beta-alanine in an ATP-dependent reaction via a pantoyl-adenylate intermediate. The protein is Pantothenate synthetase of Rhodospirillum rubrum (strain ATCC 11170 / ATH 1.1.1 / DSM 467 / LMG 4362 / NCIMB 8255 / S1).